The following is a 171-amino-acid chain: Adenine phosphoribosyltransferase (171 aa).

This sequence belongs to the purine/pyrimidine phosphoribosyltransferase family. In terms of assembly, homodimer.

It localises to the cytoplasm. The enzyme catalyses AMP + diphosphate = 5-phospho-alpha-D-ribose 1-diphosphate + adenine. It functions in the pathway purine metabolism; AMP biosynthesis via salvage pathway; AMP from adenine: step 1/1. In terms of biological role, catalyzes a salvage reaction resulting in the formation of AMP, that is energically less costly than de novo synthesis. The sequence is that of Adenine phosphoribosyltransferase from Mycoplasma mobile (strain ATCC 43663 / 163K / NCTC 11711) (Mesomycoplasma mobile).